Here is a 281-residue protein sequence, read N- to C-terminus: Urease accessory protein UreD (281 aa).

Belongs to the UreD family. UreD, UreF and UreG form a complex that acts as a GTP-hydrolysis-dependent molecular chaperone, activating the urease apoprotein by helping to assemble the nickel containing metallocenter of UreC. The UreE protein probably delivers the nickel.

It localises to the cytoplasm. Required for maturation of urease via the functional incorporation of the urease nickel metallocenter. The sequence is that of Urease accessory protein UreD from Pseudomonas savastanoi pv. phaseolicola (strain 1448A / Race 6) (Pseudomonas syringae pv. phaseolicola (strain 1448A / Race 6)).